The primary structure comprises 176 residues: Oxaleimides biosynthesis cluster protein N (176 aa).

Helical transmembrane passes span 5 to 25, 71 to 91, 104 to 124, and 155 to 175; these read LLVVSAGSLALKVLRVTPLIT, VWTGVISIVLFTRVALILNLF, FLYGVGLFLSFAHLSVAPKML, and FWIVDVPFWVVGVWATLEGLK.

It is found in the membrane. It functions in the pathway secondary metabolite biosynthesis. Functionally, part of the gene cluster that mediates the biosynthesis of oxaleimides, cytotoxic compounds containing an unusual disubstituted succinimide moiety. The first step of the pathway is provided by the HR-PKS poxF that serves in a new mode of collaborative biosynthesis with the PKS-NRPS poxE, by providing the olefin containing amino acid substrate via the synthesis of an ACP-bound dec-4-enoate. The cytochrome P450 monooxygenase poxM-catalyzed oxidation at the alpha-position creates the enzyme-bound 2-hydroxydec-4-enoyl-ACP thioester, which may be prone to spontaneous hydrolysis to yield 2-hydroxydec-4-enoic acid due to increased electrophilicity of the carbonyl. 2-hydroxydec-4-enoic acid can then be further oxidized by poxM to yield the alpha-ketoacid 2-oxodec-4-enoicacid, which is reductively aminated by the aminotransferase poxL to yield (S,E)-2-aminodec-4-enoic acid. The Hybrid PKS-NRPS synthetase poxE then performs condensation between the octaketide product of its PKS modules and the amino group of (S,E)-2-aminodec-4-enoic acid which is activated and incorporated by the adenylation domain. The resulting aminoacyl product can be cyclized by the Diels-Alderase PoxQ and reductively released by the reductive (R) domain of poxE to yield an aldehyde intermediate. The released aldehyde is then substrate for a Knoevenagel condensation by the hydrolyase poxO followed by an oxidation at the 5-position of the pyrrolidone ring. The presence of the olefin from the amino acid building block allows for migration of the substituted allyl group to occur. This allylic transposition reaction takes place in a conjugate addition, semipinacol-like fashion to yield a succinimide intermediate. Iterative two-electron oxidations of the C7 methyl of the succinimide intermediate to the carboxylic acid can be catalyzed by one of two remaining cytochrome P450 monooxygenasess poxC or poxD to yield oxaleimide A. Subsequent oxidation yields the maleimide scaffold oxaleimide I. Both oxaleimide A and oxaleimide I can undergo oxidative modifications in the decalin ring to yield the series of products oxaleimides B to H. This Penicillium oxalicum (strain 114-2 / CGMCC 5302) (Penicillium decumbens) protein is Oxaleimides biosynthesis cluster protein N.